The chain runs to 226 residues: UPF0111 protein AF_1799 (226 aa).

It belongs to the UPF0111 family.

This is UPF0111 protein AF_1799 from Archaeoglobus fulgidus (strain ATCC 49558 / DSM 4304 / JCM 9628 / NBRC 100126 / VC-16).